A 196-amino-acid polypeptide reads, in one-letter code: MSYYAFEGLIPVVHPTAFVHPSAVLIGDVIVGAGVYIGPLASLRGDYGRLIVQAGANIQDGCIMHGYTDTDTIVGENGHIGHGAILHGCVIGRDALVGMNSVIMDGAVIGEESIVAAMSFVKAGFHGEKRQLLMGTPARAVRSVSDDELHWKRLNTKEYQDLVGRCHASLHETQPLRQMEENRPRLQGTTDVTPKR.

The segment at T173–R196 is disordered. Residues Q187–R196 show a composition bias toward polar residues.

It belongs to the transferase hexapeptide repeat family.

It participates in amine and polyamine metabolism; carnitine metabolism. Functionally, overproduction of CaiE stimulates the activity of CaiB and CaiD. The sequence is that of Carnitine operon protein CaiE from Escherichia coli O157:H7.